The primary structure comprises 441 residues: Insulinoma-associated protein 1 (441 aa).

Residues 1–12 show a composition bias toward basic residues; it reads MPKGFLVKRSRK. The tract at residues 1–20 is SNAG domain; the sequence is MPKGFLVKRSRKSPPVSYRV. 4 disordered regions span residues 1 to 31, 43 to 189, 205 to 224, and 278 to 316; these read MPKG…GESL, TGGA…KAIR, LKIK…SSGP, and RWHK…EDGL. The span at 19–28 shows a compositional bias: basic and acidic residues; it reads RVREEEEPRG. The span at 74–83 shows a compositional bias: polar residues; sequence NPDTVQQALY. Basic and acidic residues predominate over residues 89–98; that stretch reads VSREQRERKY. Composition is skewed to low complexity over residues 138-147 and 169-180; these read VSSSSSVSRS and GATSSSAPSKPP. A C2H2-type 1 zinc finger spans residues 258–280; it reads YRCPECHKVFSCPANLASHRRWH. Positions 292–302 are enriched in basic and acidic residues; sequence AKEEPLSDRDT. C2H2-type zinc fingers lie at residues 317 to 339, 372 to 395, and 400 to 423; these read YECP…LLSH, HPCP…RLLH, and YPCK…NKCH.

Belongs to the INSM1 family.

It localises to the nucleus. Its function is as follows. May act as a transcriptional regulator. Plays a role in noradrenergic neuron, pancreatic and gastrointestinal endocrine cells differentiation during embryonic development. The chain is Insulinoma-associated protein 1 (insm1) from Xenopus tropicalis (Western clawed frog).